The following is a 56-amino-acid chain: Aspartyl-phosphate phosphatase YisI (56 aa).

The protein belongs to the spo0E family.

Functionally, aspartyl-phosphate phosphatase which specifically dephosphorylates the sporulation transcription factor Spo0A-P and negatively regulates the sporulation initiation pathway in order to control the proper timing of sporulation. The polypeptide is Aspartyl-phosphate phosphatase YisI (yisI) (Bacillus subtilis (strain 168)).